Reading from the N-terminus, the 393-residue chain is Bifunctional enzyme Fae/Hps (393 aa).

The tract at residues 1-161 (MYLIGEALVG…HEKDRAAHAV (161 aa)) is formaldehyde-activating enzyme. The active-site Proton donor is the histidine 17. Substrate is bound by residues aspartate 19, leucine 48, lysine 66, threonine 68, and glutamine 83. The tract at residues 162–393 (MGFKVQRLWD…IDQFRIMTDF (232 aa)) is 3-hexulose-6-phosphate synthase.

It in the N-terminal section; belongs to the formaldehyde-activating enzyme family. This sequence in the C-terminal section; belongs to the HPS/KGPDC family. HPS subfamily.

The catalysed reaction is 5,6,7,8-tetrahydromethanopterin + formaldehyde = 5,10-methylenetetrahydromethanopterin + H2O. It carries out the reaction D-ribulose 5-phosphate + formaldehyde = D-arabino-hex-3-ulose 6-phosphate. It functions in the pathway carbohydrate biosynthesis; D-ribose 5-phosphate biosynthesis. In terms of biological role, catalyzes the condensation of formaldehyde with tetrahydromethanopterin (H(4)MPT) to 5,10-methylenetetrahydromethanopterin. Its function is as follows. Catalyzes the reversible formation of ribulose-5-phosphate and formaldehyde from 3-hexulose-6-phosphate. The chain is Bifunctional enzyme Fae/Hps from Methanoculleus marisnigri (strain ATCC 35101 / DSM 1498 / JR1).